A 214-amino-acid chain; its full sequence is Putative F-box protein At5g15670 (214 aa).

The region spanning 22–68 (RNKFDEIPHDLVIEILGRLPAKSVARFLTVSKLWATSIRSLDFIKSY) is the F-box domain.

The polypeptide is Putative F-box protein At5g15670 (Arabidopsis thaliana (Mouse-ear cress)).